The following is a 732-amino-acid chain: DNA-directed RNA polymerase subunit beta' (732 aa).

4 residues coordinate Zn(2+): C70, C72, C85, and C88. Residues D575, D577, and D579 each contribute to the Mg(2+) site.

The protein belongs to the RNA polymerase beta' chain family. RpoC1 subfamily. In plastids the minimal PEP RNA polymerase catalytic core is composed of four subunits: alpha, beta, beta', and beta''. When a (nuclear-encoded) sigma factor is associated with the core the holoenzyme is formed, which can initiate transcription. Mg(2+) is required as a cofactor. Requires Zn(2+) as cofactor.

Its subcellular location is the plastid. The protein resides in the chloroplast. The catalysed reaction is RNA(n) + a ribonucleoside 5'-triphosphate = RNA(n+1) + diphosphate. In terms of biological role, DNA-dependent RNA polymerase catalyzes the transcription of DNA into RNA using the four ribonucleoside triphosphates as substrates. The chain is DNA-directed RNA polymerase subunit beta' from Thalassiosira pseudonana (Marine diatom).